A 167-amino-acid polypeptide reads, in one-letter code: NADH-quinone oxidoreductase subunit B (167 aa).

[4Fe-4S] cluster-binding residues include cysteine 40, cysteine 41, cysteine 105, and cysteine 134.

It belongs to the complex I 20 kDa subunit family. NDH-1 is composed of 14 different subunits. Subunits NuoB, C, D, E, F, and G constitute the peripheral sector of the complex. The cofactor is [4Fe-4S] cluster.

The protein resides in the cell inner membrane. The enzyme catalyses a quinone + NADH + 5 H(+)(in) = a quinol + NAD(+) + 4 H(+)(out). In terms of biological role, NDH-1 shuttles electrons from NADH, via FMN and iron-sulfur (Fe-S) centers, to quinones in the respiratory chain. The immediate electron acceptor for the enzyme in this species is believed to be ubiquinone. Couples the redox reaction to proton translocation (for every two electrons transferred, four hydrogen ions are translocated across the cytoplasmic membrane), and thus conserves the redox energy in a proton gradient. In Campylobacter jejuni subsp. jejuni serotype O:6 (strain 81116 / NCTC 11828), this protein is NADH-quinone oxidoreductase subunit B.